A 492-amino-acid polypeptide reads, in one-letter code: Catalase isozyme 3 (492 aa).

Residues H65 and N138 contribute to the active site. Y347 contributes to the heme binding site.

This sequence belongs to the catalase family. As to quaternary structure, homotetramer. Heme is required as a cofactor. Abundant in green cotyledons, etiolated cotyledons, green hypocotyl and root, but not in young leaf.

Its subcellular location is the peroxisome. It carries out the reaction 2 H2O2 = O2 + 2 H2O. Its function is as follows. Occurs in almost all aerobically respiring organisms and serves to protect cells from the toxic effects of hydrogen peroxide. This chain is Catalase isozyme 3 (CAT3), found in Cucurbita pepo (Vegetable marrow).